Consider the following 583-residue polypeptide: Torsin-1A-interacting protein 1 (583 aa).

Residues M1–R12 are compositionally biased toward basic and acidic residues. Disordered stretches follow at residues M1–S254 and A271–Q293. The Nuclear portion of the chain corresponds to M1 to W338. S60 carries the post-translational modification Phosphoserine. Composition is skewed to basic and acidic residues over residues V74–E101 and R115–T124. 2 positions are modified to phosphoserine: S135 and S143. Methionine sulfoxide is present on M146. 3 positions are modified to phosphoserine: S154, S156, and S157. The segment covering Q165–K174 has biased composition (polar residues). Phosphoserine occurs at positions 186 and 215. Positions E216–Q225 are enriched in acidic residues. T220 carries the post-translational modification Phosphothreonine. 3 positions are modified to phosphoserine: S227, S230, and S242. A compositionally biased stretch (basic and acidic residues) spans R238–T250. Over residues S277–P287 the composition is skewed to polar residues. M301 carries the methionine sulfoxide modification. S305 carries the post-translational modification Phosphoserine. A Glycyl lysine isopeptide (Lys-Gly) (interchain with G-Cter in SUMO2) cross-link involves residue K308. Residues S309 and S315 each carry the phosphoserine modification. The segment at S309–Q328 is disordered. Residues W339–F355 form a helical membrane-spanning segment. The Perinuclear space segment spans residues S356–L583. An interaction with TOR1A region spans residues S356–L583. Residues E359–S435 adopt a coiled-coil conformation. N-linked (GlcNAc...) asparagine glycosylation occurs at N399. M552 is subject to Methionine sulfoxide.

This sequence belongs to the TOR1AIP family. As to quaternary structure, interacts with ATP1B4. Interacts with TOR1A (ATP-bound). Interacts with TOR1B, TOR2A and TOR3A. Interacts with VIM. Phosphorylated. Dephosphorylated at Ser-309 and Ser-315 by serine/threonine-protein phosphatase PP1. In terms of tissue distribution, expressed in muscle, liver and kidney. As to expression, major isoform present in liver, brain and heart (at protein level). Expressed at lower levels than isoform 4 in lung, kidney and spleen (at protein level). Similar levels of isoforms 1 and 4 are observed in ovary, testis and pancreas (at protein level). Expressed at higher levels than isoform 1 in lung, kidney and spleen (at protein level). Expressed at lower levels than isoform 1 in liver, brain and heart (at protein level). Similar levels of isoforms 1 and 4 are observed in ovary, testis and pancreas (at protein level).

It is found in the nucleus inner membrane. The protein localises to the nucleus envelope. It localises to the nucleus. Required for nuclear membrane integrity. Induces TOR1A and TOR1B ATPase activity and is required for their location on the nuclear membrane. Binds to A- and B-type lamins. Possible role in membrane attachment and assembly of the nuclear lamina. The polypeptide is Torsin-1A-interacting protein 1 (TOR1AIP1) (Homo sapiens (Human)).